Consider the following 119-residue polypeptide: Holo-[acyl-carrier-protein] synthase (119 aa).

D8 and E58 together coordinate Mg(2+).

This sequence belongs to the P-Pant transferase superfamily. AcpS family. Mg(2+) serves as cofactor.

The protein localises to the cytoplasm. It carries out the reaction apo-[ACP] + CoA = holo-[ACP] + adenosine 3',5'-bisphosphate + H(+). Transfers the 4'-phosphopantetheine moiety from coenzyme A to a Ser of acyl-carrier-protein. The protein is Holo-[acyl-carrier-protein] synthase of Geobacillus sp. (strain WCH70).